The sequence spans 87 residues: Protein anon-73B1 (87 aa).

The chain crosses the membrane as a helical span at residues 25 to 47 (LLIRYGLYVGALFQFVCISAAVL). The interval 52-87 (PDVNSNPETGEVTEREGEPVRTRLHKIRKLEKKKRR) is disordered. Residues 63-72 (VTEREGEPVR) show a composition bias toward basic and acidic residues. Positions 73 to 87 (TRLHKIRKLEKKKRR) are enriched in basic residues.

It belongs to the UPF0239 family.

It is found in the membrane. This chain is Protein anon-73B1, found in Drosophila erecta (Fruit fly).